A 260-amino-acid polypeptide reads, in one-letter code: NAD-capped RNA hydrolase NudC (260 aa).

Residue R69 participates in substrate binding. Residues C98 and C101 each coordinate Zn(2+). E111 provides a ligand contact to substrate. Zn(2+)-binding residues include C116 and C119. Y124 is a binding site for substrate. The Nudix hydrolase domain maps to 125-248; that stretch reads PQIAPCIIVA…TVARRLIEDT (124 aa). 3 residues coordinate a divalent metal cation: A158, E174, and E178. The Nudix box motif lies at 159–180; that stretch reads GFVEVGETLEQTVVREVMEESQ. Residue 192-199 participates in substrate binding; that stretch reads QPWPFPHS. E219 is a binding site for a divalent metal cation. A241 contributes to the substrate binding site.

The protein belongs to the Nudix hydrolase family. NudC subfamily. Homodimer. Mg(2+) serves as cofactor. Requires Mn(2+) as cofactor. It depends on Zn(2+) as a cofactor.

The enzyme catalyses a 5'-end NAD(+)-phospho-ribonucleoside in mRNA + H2O = a 5'-end phospho-adenosine-phospho-ribonucleoside in mRNA + beta-nicotinamide D-ribonucleotide + 2 H(+). It carries out the reaction NAD(+) + H2O = beta-nicotinamide D-ribonucleotide + AMP + 2 H(+). It catalyses the reaction NADH + H2O = reduced beta-nicotinamide D-ribonucleotide + AMP + 2 H(+). Functionally, mRNA decapping enzyme that specifically removes the nicotinamide adenine dinucleotide (NAD) cap from a subset of mRNAs by hydrolyzing the diphosphate linkage to produce nicotinamide mononucleotide (NMN) and 5' monophosphate mRNA. The NAD-cap is present at the 5'-end of some mRNAs and stabilizes RNA against 5'-processing. Has preference for mRNAs with a 5'-end purine. Catalyzes the hydrolysis of a broad range of dinucleotide pyrophosphates. This chain is NAD-capped RNA hydrolase NudC, found in Pectobacterium carotovorum subsp. carotovorum (strain PC1).